The following is a 546-amino-acid chain: Alpha-isocomene synthase (546 aa).

Mg(2+)-binding residues include Asp-299, Asp-303, Asp-443, and Glu-451. The DDXXD motif motif lies at 299 to 303; the sequence is DDTYD.

Belongs to the terpene synthase family. Tpsa subfamily. The cofactor is Mg(2+). It depends on Mn(2+) as a cofactor. In terms of tissue distribution, highly expressed in roots, lower levels in stems and leaves and detected in disk florets, but not in ray florets.

The catalysed reaction is (2E,6E)-farnesyl diphosphate = (-)-alpha-isocomene + diphosphate. It functions in the pathway secondary metabolite biosynthesis; terpenoid biosynthesis. Sesquiterpene synthase involved in the biosynthesis of alpha-isocomene as the major product and detectable amounts of beta-caryophyllene, beta-isocomene, silphinene and modeph-2-ene. Produces exclusively the (-)-(E)-beta caryophyllene enantiomer. This chain is Alpha-isocomene synthase, found in Matricaria chamomilla var. recutita (German chamomile).